Reading from the N-terminus, the 347-residue chain is NADH-ubiquinone oxidoreductase chain 2 (347 aa).

A run of 11 helical transmembrane segments spans residues 3 to 23 (PMTS…VLMS), 25 to 45 (HWFM…PILM), 59 to 79 (YFLT…INLM), 96 to 116 (TLIT…FWVP), 122 to 142 (VSLS…LSLL), 149 to 169 (INTN…GWGG), 178 to 198 (IMAY…IYNP), 200 to 220 (LSLL…MLLI), 240 to 260 (ITTM…LTGF), 274 to 294 (NSVI…FFYM), and 326 to 346 (MTML…FISL).

The protein belongs to the complex I subunit 2 family. Core subunit of respiratory chain NADH dehydrogenase (Complex I) which is composed of 45 different subunits. Interacts with TMEM242.

The protein localises to the mitochondrion inner membrane. It carries out the reaction a ubiquinone + NADH + 5 H(+)(in) = a ubiquinol + NAD(+) + 4 H(+)(out). Its function is as follows. Core subunit of the mitochondrial membrane respiratory chain NADH dehydrogenase (Complex I) which catalyzes electron transfer from NADH through the respiratory chain, using ubiquinone as an electron acceptor. Essential for the catalytic activity and assembly of complex I. This Sylvisorex granti (Grant's forest shrew) protein is NADH-ubiquinone oxidoreductase chain 2.